The chain runs to 300 residues: Porphobilinogen deaminase (300 aa).

Cys-239 bears the S-(dipyrrolylmethanemethyl)cysteine mark.

This sequence belongs to the HMBS family. Monomer. It depends on dipyrromethane as a cofactor.

It catalyses the reaction 4 porphobilinogen + H2O = hydroxymethylbilane + 4 NH4(+). It functions in the pathway porphyrin-containing compound metabolism; protoporphyrin-IX biosynthesis; coproporphyrinogen-III from 5-aminolevulinate: step 2/4. In terms of biological role, tetrapolymerization of the monopyrrole PBG into the hydroxymethylbilane pre-uroporphyrinogen in several discrete steps. The protein is Porphobilinogen deaminase of Francisella tularensis subsp. tularensis (strain WY96-3418).